A 374-amino-acid polypeptide reads, in one-letter code: UDP-N-acetylglucosamine--N-acetylmuramyl-(pentapeptide) pyrophosphoryl-undecaprenol N-acetylglucosamine transferase (374 aa).

UDP-N-acetyl-alpha-D-glucosamine is bound by residues 13–15 (TGG), Asn124, Arg165, Ser193, and Gln294.

Belongs to the glycosyltransferase 28 family. MurG subfamily.

The protein localises to the cell inner membrane. The catalysed reaction is di-trans,octa-cis-undecaprenyl diphospho-N-acetyl-alpha-D-muramoyl-L-alanyl-D-glutamyl-meso-2,6-diaminopimeloyl-D-alanyl-D-alanine + UDP-N-acetyl-alpha-D-glucosamine = di-trans,octa-cis-undecaprenyl diphospho-[N-acetyl-alpha-D-glucosaminyl-(1-&gt;4)]-N-acetyl-alpha-D-muramoyl-L-alanyl-D-glutamyl-meso-2,6-diaminopimeloyl-D-alanyl-D-alanine + UDP + H(+). Its pathway is cell wall biogenesis; peptidoglycan biosynthesis. Its function is as follows. Cell wall formation. Catalyzes the transfer of a GlcNAc subunit on undecaprenyl-pyrophosphoryl-MurNAc-pentapeptide (lipid intermediate I) to form undecaprenyl-pyrophosphoryl-MurNAc-(pentapeptide)GlcNAc (lipid intermediate II). In Rhizobium leguminosarum bv. trifolii (strain WSM2304), this protein is UDP-N-acetylglucosamine--N-acetylmuramyl-(pentapeptide) pyrophosphoryl-undecaprenol N-acetylglucosamine transferase.